The chain runs to 273 residues: Small ribosomal subunit protein uS2 (273 aa).

A disordered region spans residues 244-273 (SDEEANSSAEENENRQEDLLAKKYDSSEAN). The segment covering 255 to 273 (NENRQEDLLAKKYDSSEAN) has biased composition (basic and acidic residues).

This sequence belongs to the universal ribosomal protein uS2 family.

The polypeptide is Small ribosomal subunit protein uS2 (Chlamydia felis (strain Fe/C-56) (Chlamydophila felis)).